The following is a 452-amino-acid chain: MYPWQDFAIQPDFSDKIALRTTQGDMLTWIELTTKINQTVAFLQKKGVNAESAVAFVGKNSEKILFLYLATIQLGAKVLGINPAFPQEKIAKLCEFYQIDFCFYDKDLLNLQEIDVFTQKADFFRPATMTLTSGSTGLPKAVVHNVQAHLDNAKGVCNLMKFDCNQSWLLSLPLYHVSGQGIVWRWLYCGAQLHFPEDDFYASLLKTTHVSLVPTQLQRLLDYLQENPSISFATRHILLGGAHIPTELTQNMLKYGIETYSGYGMTEMASTVFAKKSDRKQGVGQPLLGREYCLVNDEIWLKGAGLAMGYWKDRQIVPLTNNQGWIQTKDKGIWQEGELVIIGRLDNMFISGGENIQPEEIEQVIIQHSSVNQVFVLPQKNKEFGQRPVALVDFNEPFSKSAVENLMFFLQDKLARFKQPIAYYPLPLMLEKGIKISRKQLADWLAKRDEIN.

Belongs to the ATP-dependent AMP-binding enzyme family. MenE subfamily.

The enzyme catalyses 2-succinylbenzoate + ATP + CoA = 2-succinylbenzoyl-CoA + AMP + diphosphate. Its pathway is quinol/quinone metabolism; 1,4-dihydroxy-2-naphthoate biosynthesis; 1,4-dihydroxy-2-naphthoate from chorismate: step 5/7. The protein operates within quinol/quinone metabolism; menaquinone biosynthesis. Converts 2-succinylbenzoate (OSB) to 2-succinylbenzoyl-CoA (OSB-CoA). In Haemophilus influenzae (strain ATCC 51907 / DSM 11121 / KW20 / Rd), this protein is 2-succinylbenzoate--CoA ligase.